Reading from the N-terminus, the 744-residue chain is Catalase-peroxidase (744 aa).

The tract at residues 1-21 (MANESKCPFHQTAGGGTSNRD) is disordered. A cross-link (tryptophyl-tyrosyl-methioninium (Trp-Tyr) (with M-267)) is located at residues 91 to 241 (WHSAGTYRIG…LAAVQMGLIY (151 aa)). The active-site Proton acceptor is the H92. The tryptophyl-tyrosyl-methioninium (Tyr-Met) (with W-91) cross-link spans 241–267 (YVNPEGPEGNPDPVASGKDIRDTFGRM). H282 contacts heme b. The tract at residues 361–387 (GAHQWRPKDGKGANTVPDAHDTTKRHA) is disordered.

It belongs to the peroxidase family. Peroxidase/catalase subfamily. In terms of assembly, homodimer or homotetramer. Heme b serves as cofactor. In terms of processing, formation of the three residue Trp-Tyr-Met cross-link is important for the catalase, but not the peroxidase activity of the enzyme.

It catalyses the reaction H2O2 + AH2 = A + 2 H2O. The catalysed reaction is 2 H2O2 = O2 + 2 H2O. In terms of biological role, bifunctional enzyme with both catalase and broad-spectrum peroxidase activity. This is Catalase-peroxidase from Pseudomonas entomophila (strain L48).